A 149-amino-acid chain; its full sequence is D-aminoacyl-tRNA deacylase (149 aa).

A Gly-cisPro motif, important for rejection of L-amino acids motif is present at residues 137–138 (GP).

It belongs to the DTD family. As to quaternary structure, homodimer.

Its subcellular location is the cytoplasm. It catalyses the reaction glycyl-tRNA(Ala) + H2O = tRNA(Ala) + glycine + H(+). The catalysed reaction is a D-aminoacyl-tRNA + H2O = a tRNA + a D-alpha-amino acid + H(+). Its function is as follows. An aminoacyl-tRNA editing enzyme that deacylates mischarged D-aminoacyl-tRNAs. Also deacylates mischarged glycyl-tRNA(Ala), protecting cells against glycine mischarging by AlaRS. Acts via tRNA-based rather than protein-based catalysis; rejects L-amino acids rather than detecting D-amino acids in the active site. By recycling D-aminoacyl-tRNA to D-amino acids and free tRNA molecules, this enzyme counteracts the toxicity associated with the formation of D-aminoacyl-tRNA entities in vivo and helps enforce protein L-homochirality. The protein is D-aminoacyl-tRNA deacylase of Clostridium botulinum (strain Eklund 17B / Type B).